The primary structure comprises 229 residues: Potassium/proton antiporter CemA (229 aa).

The next 3 helical transmembrane spans lie at 7–27, 107–127, and 189–209; these read FTPL…SLLF, ILHF…SILG, and IISG…KYWI.

The protein belongs to the CemA family.

Its subcellular location is the plastid. It is found in the chloroplast inner membrane. The enzyme catalyses K(+)(in) + H(+)(out) = K(+)(out) + H(+)(in). Functionally, contributes to K(+)/H(+) antiport activity by supporting proton efflux to control proton extrusion and homeostasis in chloroplasts in a light-dependent manner to modulate photosynthesis. Prevents excessive induction of non-photochemical quenching (NPQ) under continuous-light conditions. Indirectly promotes efficient inorganic carbon uptake into chloroplasts. The protein is Potassium/proton antiporter CemA of Helianthus annuus (Common sunflower).